A 293-amino-acid chain; its full sequence is MSITAGMVKELRERTGSGMMECKKALTETGGDLEAAVELMRKQGLAKADKKSGRTAAEGRICARVSEDGKAAAIVEVNCETDFVAKGDDFVKFADDVAAVALASSAMTVEELLAGEMRAGATVDQVRREMIAKIGENINVRRFERLSSQDGRIASYLHGTRIGVLVELVGGDAELGKDIAMHIAASKPLCCDEKGVPAEVIAKEKEIFSAQAQASGKPANIVEKMVEGRIGKFLGEITLVGQPFVKDPDQTVGKLLQSKGASVVRFVRFEVGEGIEKEETNFAEEVMAQVRAS.

An involved in Mg(2+) ion dislocation from EF-Tu region spans residues 81–84; that stretch reads TDFV.

This sequence belongs to the EF-Ts family.

It localises to the cytoplasm. Associates with the EF-Tu.GDP complex and induces the exchange of GDP to GTP. It remains bound to the aminoacyl-tRNA.EF-Tu.GTP complex up to the GTP hydrolysis stage on the ribosome. The protein is Elongation factor Ts of Methylococcus capsulatus (strain ATCC 33009 / NCIMB 11132 / Bath).